Here is a 1859-residue protein sequence, read N- to C-terminus: Retinitis pigmentosa 1-like 1 protein (1859 aa).

2 disordered regions span residues 1–22 and 115–154; these read MNST…PSHR and RKPP…YSWK. Residues 42–126 form the Doublecortin 1 domain; sequence KKITFLKRGD…PPKTSREPGR (85 aa). Residues 115 to 126 show a composition bias toward basic and acidic residues; sequence RKPPKTSREPGR. Residues 130-139 are compositionally biased toward polar residues; sequence KSPSAGQAQV. Positions 160–239 constitute a Doublecortin 2 domain; the sequence is RRLTLVKNGD…NEAFRCLEME (80 aa). Disordered stretches follow at residues 263-301, 426-445, 457-593, 700-750, 868-920, 952-997, 1152-1211, 1227-1255, 1298-1350, and 1567-1859; these read PNAK…SGHR, IWRN…RRRW, WRQE…TQSH, MPQE…TSKA, CFGR…TPSA, NTEV…GVLS, TEDF…YPEL, ATGG…STML, GSQD…RVRE, and LQSK…DLDF. Positions 457–472 are enriched in basic and acidic residues; sequence WRQEANHRKGHDKDNL. Composition is skewed to polar residues over residues 499 to 512 and 535 to 551; these read GSDT…ASSH and PETQ…SVSA. Positions 716–728 are enriched in low complexity; it reads SPSNSPSAGNQAS. Polar residues predominate over residues 734–750; it reads PFSSSLDLQEPQATSKA. Low complexity predominate over residues 870–883; it reads GRESASNGSTSSGH. 3 stretches are compositionally biased toward polar residues: residues 1241–1252, 1336–1345, and 1567–1577; these read TWGNAPEQSVHS, ESPQHFSESN, and LQSKKGGSSNR. Residues 1616-1632 show a composition bias toward basic and acidic residues; sequence GEGKQRLRAEEDPEILK. Positions 1641–1652 are enriched in acidic residues; sequence PEEDEATEEDGE. The segment covering 1700-1720 has biased composition (basic and acidic residues); the sequence is EASRERQQEVEGRHQDVKEDS. The segment covering 1756 to 1778 has biased composition (polar residues); sequence SHHTACSSRALSLDNSSQVSQKG.

Interacts with RP1; has a synergistic effect with RP1 in photoreceptor differentiation. Retinal-specific; expressed in photoreceptor.

It localises to the cytoplasm. It is found in the cytoskeleton. Its subcellular location is the cilium axoneme. The protein resides in the cell projection. The protein localises to the cilium. It localises to the photoreceptor outer segment. In terms of biological role, required for the differentiation of photoreceptor cells. Plays a role in the organization of outer segment of rod and cone photoreceptors. The chain is Retinitis pigmentosa 1-like 1 protein (Rp1l1) from Mus musculus (Mouse).